We begin with the raw amino-acid sequence, 351 residues long: S-adenosylmethionine:tRNA ribosyltransferase-isomerase (351 aa).

Belongs to the QueA family. In terms of assembly, monomer.

It is found in the cytoplasm. The catalysed reaction is 7-aminomethyl-7-carbaguanosine(34) in tRNA + S-adenosyl-L-methionine = epoxyqueuosine(34) in tRNA + adenine + L-methionine + 2 H(+). Its pathway is tRNA modification; tRNA-queuosine biosynthesis. Transfers and isomerizes the ribose moiety from AdoMet to the 7-aminomethyl group of 7-deazaguanine (preQ1-tRNA) to give epoxyqueuosine (oQ-tRNA). The sequence is that of S-adenosylmethionine:tRNA ribosyltransferase-isomerase from Photobacterium profundum (strain SS9).